The following is a 331-amino-acid chain: Bifunctional nuclease 1 (331 aa).

A BFN domain is found at 126 to 261; sequence CVQNNPRVLR…RIAYNNGLKV (136 aa). The 36-residue stretch at 291 to 326 folds into the UVR domain; the sequence is EAQEFDLVRNMLVAAVEERYKDAAQYRDQLFMFRAK.

This sequence belongs to the bifunctional nuclease family.

It is found in the nucleus. Its function is as follows. Bifunctional nuclease with both RNase and DNase activities. Involved in basal defense response. Participates in abscisic acid-derived callose deposition following infection by a necrotrophic pathogen. The chain is Bifunctional nuclease 1 (BBD1) from Oryza sativa subsp. japonica (Rice).